The primary structure comprises 295 residues: GTPase Era (295 aa).

The Era-type G domain maps to 3 to 170; the sequence is KSGFVTIVGR…VDLMKTELPE (168 aa). The segment at 11–18 is G1; that stretch reads GRPNVGKS. Residue 11–18 coordinates GTP; it reads GRPNVGKS. Positions 37–41 are G2; it reads QTTRN. The G3 stretch occupies residues 58-61; that stretch reads DTPG. Residues 58–62 and 120–123 contribute to the GTP site; these read DTPGI and NKID. Residues 120–123 form a G4 region; it reads NKID. Positions 149–151 are G5; sequence IAA. A KH type-2 domain is found at 201-278; the sequence is LRDEVPHGIA…NVKIWVKVRK (78 aa).

The protein belongs to the TRAFAC class TrmE-Era-EngA-EngB-Septin-like GTPase superfamily. Era GTPase family. As to quaternary structure, monomer.

It localises to the cytoplasm. The protein localises to the cell membrane. Functionally, an essential GTPase that binds both GDP and GTP, with rapid nucleotide exchange. Plays a role in 16S rRNA processing and 30S ribosomal subunit biogenesis and possibly also in cell cycle regulation and energy metabolism. The polypeptide is GTPase Era (Clostridium botulinum (strain Alaska E43 / Type E3)).